Consider the following 173-residue polypeptide: Endoribonuclease YbeY (173 aa).

Residues His120, His124, and His130 each contribute to the Zn(2+) site.

Belongs to the endoribonuclease YbeY family. It depends on Zn(2+) as a cofactor.

The protein resides in the cytoplasm. Functionally, single strand-specific metallo-endoribonuclease involved in late-stage 70S ribosome quality control and in maturation of the 3' terminus of the 16S rRNA. The sequence is that of Endoribonuclease YbeY from Kineococcus radiotolerans (strain ATCC BAA-149 / DSM 14245 / SRS30216).